Here is a 324-residue protein sequence, read N- to C-terminus: NADH-cytochrome b5 reductase 1 (324 aa).

The chain crosses the membrane as a helical span at residues 49–69 (LNIVLAFVVGLIGSVVVLLYF). The FAD-binding FR-type domain occupies 81–184 (TQWQQYRLME…KGPKGQMRYA (104 aa)). FAD-binding positions include 164 to 179 (GSMKIGDLLSVKGPKG) and 190 to 222 (HIGMIAGGTGLTPCLQIIRAALKNPADKTQIDF).

The protein belongs to the flavoprotein pyridine nucleotide cytochrome reductase family. As to quaternary structure, monomer. Component of the 2-(3-amino-3-carboxypropyl)histidine synthase complex composed of DPH1, DPH2, DPH3 and a NADH-dependent reductase, predominantly CBR1. FAD is required as a cofactor.

The protein resides in the mitochondrion outer membrane. The enzyme catalyses 2 Fe(III)-[cytochrome b5] + NADH = 2 Fe(II)-[cytochrome b5] + NAD(+) + H(+). It catalyses the reaction 2 Fe(3+)-[Dph3] + NADH = 2 Fe(2+)-[Dph3] + NAD(+) + H(+). The protein operates within protein modification; peptidyl-diphthamide biosynthesis. Functionally, NADH-dependent reductase for DPH3 and cytochrome b5. Required for the first step of diphthamide biosynthesis, a post-translational modification of histidine which occurs in elongation factor 2. DPH1 and DPH2 transfer a 3-amino-3-carboxypropyl (ACP) group from S-adenosyl-L-methionine (SAM) to a histidine residue, the reaction is assisted by a reduction system comprising DPH3 and a NADH-dependent reductase, predominantly CBR1. By reducing DPH3, also involved in the formation of the tRNA wobble base modification mcm5s 2U (5-methoxycarbonylmethyl-2-thiouridine), mediated by the elongator complex. The cytochrome b5/NADH cytochrome b5 reductase electron transfer system supports the catalytic activity of several sterol biosynthetic enzymes. This chain is NADH-cytochrome b5 reductase 1 (CBR1), found in Mycosarcoma maydis (Corn smut fungus).